A 308-amino-acid chain; its full sequence is N-acetyl-gamma-glutamyl-phosphate reductase (308 aa).

Residue C116 is part of the active site.

This sequence belongs to the NAGSA dehydrogenase family. Type 2 subfamily.

It is found in the cytoplasm. The enzyme catalyses N-acetyl-L-glutamate 5-semialdehyde + phosphate + NADP(+) = N-acetyl-L-glutamyl 5-phosphate + NADPH + H(+). It functions in the pathway amino-acid biosynthesis; L-arginine biosynthesis; N(2)-acetyl-L-ornithine from L-glutamate: step 3/4. Catalyzes the NADPH-dependent reduction of N-acetyl-5-glutamyl phosphate to yield N-acetyl-L-glutamate 5-semialdehyde. This is N-acetyl-gamma-glutamyl-phosphate reductase from Mesorhizobium japonicum (strain LMG 29417 / CECT 9101 / MAFF 303099) (Mesorhizobium loti (strain MAFF 303099)).